The following is a 258-amino-acid chain: tRNA pseudouridine synthase A (258 aa).

Catalysis depends on Asp53, which acts as the Nucleophile. A substrate-binding site is contributed by Tyr111.

This sequence belongs to the tRNA pseudouridine synthase TruA family. In terms of assembly, homodimer.

The enzyme catalyses uridine(38/39/40) in tRNA = pseudouridine(38/39/40) in tRNA. In terms of biological role, formation of pseudouridine at positions 38, 39 and 40 in the anticodon stem and loop of transfer RNAs. This is tRNA pseudouridine synthase A from Streptococcus agalactiae serotype III (strain NEM316).